An 802-amino-acid chain; its full sequence is Oligophrenin-1 (802 aa).

The PH domain occupies 265–368 (QPTIEGYLYT…WMEAMDGKEP (104 aa)). The 185-residue stretch at 380-564 (MELNEVGFKF…ILIEHFGKIY (185 aa)) folds into the Rho-GAP domain. Disordered regions lie at residues 569–588 (EESAAPPVPPPRVTARRHKP), 607–666 (LDES…EPCP), 680–770 (GGTK…NAGE), and 783–802 (FETASRKTGSSQGRLPGDES). The segment covering 616–627 (HQTPNGTITSSI) has biased composition (polar residues). Positions 716–732 (HHKEGDADSFSKVRPPG) are enriched in basic and acidic residues.

Interacts with HOMER1. Interacts with AMPA receptor complexes. Interacts with SH3GL2 (endophilin-A1). Interacts (via C-terminus) with NR1D1. In terms of tissue distribution, expressed in brain.

The protein localises to the postsynapse. It is found in the presynapse. It localises to the cell projection. Its subcellular location is the axon. The protein resides in the dendritic spine. The protein localises to the dendrite. It is found in the cytoplasm. Its function is as follows. Stimulates GTP hydrolysis of members of the Rho family. Its action on RHOA activity and signaling is implicated in growth and stabilization of dendritic spines, and therefore in synaptic function. Critical for the stabilization of AMPA receptors at postsynaptic sites. Critical for the regulation of synaptic vesicle endocytosis at presynaptic terminals. Required for the localization of NR1D1 to dendrites, can suppress its repressor activity and protect it from proteasomal degradation. In Homo sapiens (Human), this protein is Oligophrenin-1 (OPHN1).